A 316-amino-acid chain; its full sequence is Tyrosine--tRNA ligase 2 (316 aa).

Y26, Y146, Q150, D153, and Q168 together coordinate L-tyrosine. Positions 219–223 (KMSKS) match the 'KMSKS' region motif. Residue K222 participates in ATP binding.

This sequence belongs to the class-I aminoacyl-tRNA synthetase family. TyrS type 4 subfamily. As to quaternary structure, homodimer.

The protein resides in the cytoplasm. The catalysed reaction is tRNA(Tyr) + L-tyrosine + ATP = L-tyrosyl-tRNA(Tyr) + AMP + diphosphate + H(+). Its function is as follows. Catalyzes the attachment of tyrosine to tRNA(Tyr) in a two-step reaction: tyrosine is first activated by ATP to form Tyr-AMP and then transferred to the acceptor end of tRNA(Tyr). The polypeptide is Tyrosine--tRNA ligase 2 (Pyrobaculum aerophilum (strain ATCC 51768 / DSM 7523 / JCM 9630 / CIP 104966 / NBRC 100827 / IM2)).